Reading from the N-terminus, the 550-residue chain is Rhodopsin kinase grk7-b (550 aa).

Residues Ser22–Ser45 form a disordered region. Residue Ser36 is modified to Phosphoserine. One can recognise an RGS domain in the interval Tyr57–Leu174. The region spanning Phe189 to Phe451 is the Protein kinase domain. ATP is bound by residues Leu195–Val203 and Lys218. Catalysis depends on Asp314, which acts as the Proton acceptor. The region spanning Lys452–Glu517 is the AGC-kinase C-terminal domain. Ser487 bears the Phosphoserine mark. Residues Ser531–Leu550 form a disordered region. The residue at position 547 (Cys547) is a Cysteine methyl ester. A lipid anchor (S-geranylgeranyl cysteine) is attached at Cys547. A propeptide spans Ser548–Leu550 (removed in mature form).

The protein belongs to the protein kinase superfamily. AGC Ser/Thr protein kinase family. GPRK subfamily. Autophosphorylated in vitro at Ser-487. Phosphorylation at Ser-36 is regulated by light and activated by cAMP. In terms of tissue distribution, retina, cones.

It localises to the membrane. The enzyme catalyses L-threonyl-[rhodopsin] + ATP = O-phospho-L-threonyl-[rhodopsin] + ADP + H(+). The catalysed reaction is L-seryl-[rhodopsin] + ATP = O-phospho-L-seryl-[rhodopsin] + ADP + H(+). In terms of biological role, retina-specific kinase involved in the shutoff of the photoresponse and adaptation to changing light conditions via cone opsin phosphorylation, including rhodopsin (RHO). This chain is Rhodopsin kinase grk7-b (grk7-b), found in Xenopus laevis (African clawed frog).